Here is a 160-residue protein sequence, read N- to C-terminus: S-adenosylmethionine decarboxylase proenzyme (160 aa).

The Schiff-base intermediate with substrate; via pyruvic acid role is filled by S73. The residue at position 73 (S73) is a Pyruvic acid (Ser); by autocatalysis. H78 functions as the Proton acceptor; for processing activity in the catalytic mechanism. The active-site Proton donor; for catalytic activity is C93.

Belongs to the prokaryotic AdoMetDC family. Type 1 subfamily. Heterotetramer of two alpha and two beta chains arranged as a dimer of alpha/beta heterodimers. It depends on pyruvate as a cofactor. Post-translationally, is synthesized initially as an inactive proenzyme. Formation of the active enzyme involves a self-maturation process in which the active site pyruvoyl group is generated from an internal serine residue via an autocatalytic post-translational modification. Two non-identical subunits are generated from the proenzyme in this reaction, and the pyruvate is formed at the N-terminus of the alpha chain, which is derived from the carboxyl end of the proenzyme. The post-translation cleavage follows an unusual pathway, termed non-hydrolytic serinolysis, in which the side chain hydroxyl group of the serine supplies its oxygen atom to form the C-terminus of the beta chain, while the remainder of the serine residue undergoes an oxidative deamination to produce ammonia and the pyruvoyl group blocking the N-terminus of the alpha chain.

The enzyme catalyses S-adenosyl-L-methionine + H(+) = S-adenosyl 3-(methylsulfanyl)propylamine + CO2. Its pathway is amine and polyamine biosynthesis; S-adenosylmethioninamine biosynthesis; S-adenosylmethioninamine from S-adenosyl-L-methionine: step 1/1. Functionally, catalyzes the decarboxylation of S-adenosylmethionine to S-adenosylmethioninamine (dcAdoMet), the propylamine donor required for the synthesis of the polyamines spermine and spermidine from the diamine putrescine. The protein is S-adenosylmethionine decarboxylase proenzyme of Pseudomonas paraeruginosa (strain DSM 24068 / PA7) (Pseudomonas aeruginosa (strain PA7)).